The following is a 644-amino-acid chain: Exoribonuclease 2 (644 aa).

The region spanning 189–516 (RQDLTALNFV…NHRLLKAVIK (328 aa)) is the RNB domain. The S1 motif domain occupies 561 to 643 (NTRFAAEIID…ETRSIIARPA (83 aa)).

This sequence belongs to the RNR ribonuclease family. RNase II subfamily.

The protein localises to the cytoplasm. It catalyses the reaction Exonucleolytic cleavage in the 3'- to 5'-direction to yield nucleoside 5'-phosphates.. Its function is as follows. Involved in mRNA degradation. Hydrolyzes single-stranded polyribonucleotides processively in the 3' to 5' direction. This chain is Exoribonuclease 2, found in Salmonella gallinarum (strain 287/91 / NCTC 13346).